Consider the following 324-residue polypeptide: Probable UDP-sugar transporter protein SLC35A4 (324 aa).

Over 1–18 the chain is Cytoplasmic; the sequence is MSVEDGGVPGLGRPRKAR. The chain crosses the membrane as a helical span at residues 19–39; that stretch reads WTLMLLLSTAMYGAHAPLLAL. At 40 to 52 the chain is on the lumenal side; the sequence is CHVDGRVPFRPSS. A helical membrane pass occupies residues 53 to 73; that stretch reads AVLLTELTKLLLCALSLLVGW. Residues 74-85 are Cytoplasmic-facing; it reads QAWPQGTPPWRQ. Residues 86–106 traverse the membrane as a helical segment; sequence AAPFALSALLYGANNNLVIYL. Over 107 to 141 the chain is Lumenal; sequence QRYMDPSTYQVLSNLKIGSTALFYCLCLRHRLSAR. Residues 142 to 162 traverse the membrane as a helical segment; the sequence is QGLALLLLMAAGACYAAGGLQ. Residues 163 to 180 lie on the Cytoplasmic side of the membrane; sequence DPGTTLPGPPSAAATSPM. The chain crosses the membrane as a helical span at residues 181-201; it reads PLHITPLGLLLLILYCLISGL. At 202–214 the chain is on the lumenal side; that stretch reads SSVYTELLMKRQR. The helical transmembrane segment at 215-235 threads the bilayer; the sequence is LPLALQNLFLYSFGVLLNLGL. The Cytoplasmic portion of the chain corresponds to 236–248; it reads HAGGGPGPGLLEG. The chain crosses the membrane as a helical span at residues 249-271; that stretch reads FSGWMALVVLSQALNGLLMSAVM. The Lumenal portion of the chain corresponds to 272–275; sequence KHGS. A helical transmembrane segment spans residues 276-298; the sequence is SITRLFVVSCSLVVNAVLSAALL. At 299-324 the chain is on the cytoplasmic side; it reads RLQLTAAFFLATLLIGLAVRLYYGSR.

This sequence belongs to the nucleotide-sugar transporter family. SLC35A subfamily. Found in a complex with SLC35A2 and SLC35A3.

Its subcellular location is the golgi apparatus membrane. It carries out the reaction CDP-L-ribitol(in) + CDP(out) = CDP-L-ribitol(out) + CDP(in). Its function is as follows. Mediates the transport of CDP-ribitol. Does not exhibit CMP-sialic acid, UDP-galactose and UDP-N-acetylglucosamine transport activity. The polypeptide is Probable UDP-sugar transporter protein SLC35A4 (Bos taurus (Bovine)).